The chain runs to 208 residues: 3-isopropylmalate dehydratase small subunit (208 aa).

The protein belongs to the LeuD family. LeuD type 1 subfamily. Heterodimer of LeuC and LeuD.

The catalysed reaction is (2R,3S)-3-isopropylmalate = (2S)-2-isopropylmalate. It participates in amino-acid biosynthesis; L-leucine biosynthesis; L-leucine from 3-methyl-2-oxobutanoate: step 2/4. Its function is as follows. Catalyzes the isomerization between 2-isopropylmalate and 3-isopropylmalate, via the formation of 2-isopropylmaleate. This Gluconobacter oxydans (strain 621H) (Gluconobacter suboxydans) protein is 3-isopropylmalate dehydratase small subunit.